A 400-amino-acid polypeptide reads, in one-letter code: Haptoglobin (400 aa).

The first 18 residues, 1–18, serve as a signal peptide directing secretion; that stretch reads MSALPVVVTLLLCGQLLA. 2 Sushi domains span residues 28 to 83 and 84 to 141; these read DSCP…ECED and ASCP…ECEA. Cystine bridges form between cysteine 49-cysteine 81, cysteine 105-cysteine 139, and cysteine 143-cysteine 260. The Peptidase S1 domain maps to 156–398; that stretch reads IIGGSLDAKG…ILDWVRKTIA (243 aa). Residues asparagine 285, asparagine 309, and asparagine 315 are each glycosylated (N-linked (GlcNAc...) asparagine). Cystine bridges form between cysteine 303–cysteine 334 and cysteine 345–cysteine 375. Positions 312-317 are interaction with CD163; the sequence is VPENKT.

Belongs to the peptidase S1 family. As to quaternary structure, tetramer of two alpha and two beta chains; disulfide-linked. The hemoglobin/haptoglobin complex is composed of a haptoglobin dimer bound to two hemoglobin alpha-beta dimers. Interacts with CD163. Interacts with ERGIC3. Expressed by the liver and secreted in plasma.

The protein localises to the secreted. It is found in the extracellular space. Functionally, as a result of hemolysis, hemoglobin is found to accumulate in the kidney and is secreted in the urine. Haptoglobin captures, and combines with free plasma hemoglobin to allow hepatic recycling of heme iron and to prevent kidney damage. Haptoglobin also acts as an antioxidant, has antibacterial activity and plays a role in modulating many aspects of the acute phase response. Hemoglobin/haptoglobin complexes are rapidly cleared by the macrophage CD163 scavenger receptor expressed on the surface of liver Kupfer cells through an endocytic lysosomal degradation pathway. The polypeptide is Haptoglobin (HP) (Cervus elaphus (Red deer)).